Consider the following 353-residue polypeptide: Phospho-N-acetylmuramoyl-pentapeptide-transferase (353 aa).

Transmembrane regions (helical) follow at residues 24-44 (LGFFIAFFLTLFLMPKFILWA), 66-86 (TPTMGGIVFVFATIVASVLCA), 88-108 (LGNLYVLLGMIVLVGFSFVGF), 129-149 (FGMLFVLSLVVSVLLSLKGLD), 160-180 (PLFEMPTILAVGFWVLVFLST), 192-212 (GLASVPSIFTLLSLSIFVYVA), 229-249 (VGELFVISLALVGSLFGFLWY), 256-276 (VFMGDSGSLALGGFIAYNAIV), 281-301 (ILLVLMGLIFVVETLSVILQV), and 330-350 (KVIVRFWIISMLSNLVALLSL).

This sequence belongs to the glycosyltransferase 4 family. MraY subfamily. It depends on Mg(2+) as a cofactor.

The protein resides in the cell inner membrane. It carries out the reaction UDP-N-acetyl-alpha-D-muramoyl-L-alanyl-gamma-D-glutamyl-meso-2,6-diaminopimeloyl-D-alanyl-D-alanine + di-trans,octa-cis-undecaprenyl phosphate = di-trans,octa-cis-undecaprenyl diphospho-N-acetyl-alpha-D-muramoyl-L-alanyl-D-glutamyl-meso-2,6-diaminopimeloyl-D-alanyl-D-alanine + UMP. Its pathway is cell wall biogenesis; peptidoglycan biosynthesis. Catalyzes the initial step of the lipid cycle reactions in the biosynthesis of the cell wall peptidoglycan: transfers peptidoglycan precursor phospho-MurNAc-pentapeptide from UDP-MurNAc-pentapeptide onto the lipid carrier undecaprenyl phosphate, yielding undecaprenyl-pyrophosphoryl-MurNAc-pentapeptide, known as lipid I. This Helicobacter pylori (strain Shi470) protein is Phospho-N-acetylmuramoyl-pentapeptide-transferase.